Reading from the N-terminus, the 485-residue chain is Aspartyl/glutamyl-tRNA(Asn/Gln) amidotransferase subunit B (485 aa).

Belongs to the GatB/GatE family. GatB subfamily. Heterotrimer of A, B and C subunits.

The catalysed reaction is L-glutamyl-tRNA(Gln) + L-glutamine + ATP + H2O = L-glutaminyl-tRNA(Gln) + L-glutamate + ADP + phosphate + H(+). It carries out the reaction L-aspartyl-tRNA(Asn) + L-glutamine + ATP + H2O = L-asparaginyl-tRNA(Asn) + L-glutamate + ADP + phosphate + 2 H(+). Its function is as follows. Allows the formation of correctly charged Asn-tRNA(Asn) or Gln-tRNA(Gln) through the transamidation of misacylated Asp-tRNA(Asn) or Glu-tRNA(Gln) in organisms which lack either or both of asparaginyl-tRNA or glutaminyl-tRNA synthetases. The reaction takes place in the presence of glutamine and ATP through an activated phospho-Asp-tRNA(Asn) or phospho-Glu-tRNA(Gln). The chain is Aspartyl/glutamyl-tRNA(Asn/Gln) amidotransferase subunit B from Gluconobacter oxydans (strain 621H) (Gluconobacter suboxydans).